Reading from the N-terminus, the 865-residue chain is Protein fluG (865 aa).

One can recognise a GS beta-grasp domain in the interval 442–533 (PGVKYVWTQF…VMTWWKSEQG (92 aa)). Residues 540 to 865 (PRTNLLNINN…ARRKWLVERY (326 aa)) enclose the GS catalytic domain.

It belongs to the glutamine synthetase family.

It localises to the cytoplasm. Functionally, may function as a GSI-related enzyme in synthesizing a small diffusible factor that acts as an extracellular signal directing asexual sporulation and perhaps other aspects of colony growth. May be involved in brlA activation (an early transcriptional regulator for conidiation specific gene). In Emericella nidulans (strain FGSC A4 / ATCC 38163 / CBS 112.46 / NRRL 194 / M139) (Aspergillus nidulans), this protein is Protein fluG (fluG).